The chain runs to 329 residues: Delta-aminolevulinic acid dehydratase (329 aa).

The Schiff-base intermediate with substrate role is filled by lysine 202. 5-aminolevulinate-binding residues include arginine 212 and arginine 223. Position 239 (glutamate 239) interacts with Mg(2+). The active-site Schiff-base intermediate with substrate is the lysine 254. Residues serine 280 and tyrosine 319 each contribute to the 5-aminolevulinate site.

It belongs to the ALAD family. As to quaternary structure, homooctamer.

The enzyme catalyses 2 5-aminolevulinate = porphobilinogen + 2 H2O + H(+). It participates in porphyrin-containing compound metabolism; protoporphyrin-IX biosynthesis; coproporphyrinogen-III from 5-aminolevulinate: step 1/4. Functionally, catalyzes an early step in the biosynthesis of tetrapyrroles. Binds two molecules of 5-aminolevulinate per subunit, each at a distinct site, and catalyzes their condensation to form porphobilinogen. This is Delta-aminolevulinic acid dehydratase (hemB) from Mycobacterium leprae (strain TN).